The chain runs to 156 residues: Nuclear cap-binding protein subunit 2 (156 aa).

Ser-2 is subject to N-acetylserine. A phosphoserine mark is found at Ser-13 and Ser-18. MRNA-binding positions include Tyr-20, Tyr-43, 112–116 (RTDWD), 123–127 (RQYGR), and 133–134 (QV). Residues 40–118 (CTLYVGNLSF…RIIRTDWDAG (79 aa)) enclose the RRM domain. The segment at 124–156 (QYGRGRSGGQVRDEYREDYDAGRGGYGKLAQKQ) is disordered. The span at 134–144 (VRDEYREDYDA) shows a compositional bias: basic and acidic residues. An Omega-N-methylarginine modification is found at Arg-146.

The protein belongs to the RRM NCBP2 family. Component of the nuclear cap-binding complex (CBC), a heterodimer composed of NCBP1/CBP80 and NCBP2/CBP20 that interacts with m7GpppG-capped RNA. Found in a U snRNA export complex with PHAX/RNUXA, NCBP1/CBP80, NCBP2/CBP20, RAN, XPO1 and m7G-capped RNA. Interacts with PHAX/RNUXA, EIF4G1, HNRNPF, HNRNPH1 and ALYREF/THOC4/ALY. Interacts with SRRT/ARS2 and KPNA3.

It localises to the nucleus. The protein localises to the cytoplasm. Functionally, component of the cap-binding complex (CBC), which binds co-transcriptionally to the 5' cap of pre-mRNAs and is involved in various processes such as pre-mRNA splicing, translation regulation, nonsense-mediated mRNA decay, RNA-mediated gene silencing (RNAi) by microRNAs (miRNAs) and mRNA export. The CBC complex is involved in mRNA export from the nucleus via its interaction with ALYREF/THOC4/ALY, leading to the recruitment of the mRNA export machinery to the 5' end of mRNA and to mRNA export in a 5' to 3' direction through the nuclear pore. The CBC complex is also involved in mediating U snRNA and intronless mRNAs export from the nucleus. The CBC complex is essential for a pioneer round of mRNA translation, before steady state translation when the CBC complex is replaced by cytoplasmic cap-binding protein eIF4E. The pioneer round of mRNA translation mediated by the CBC complex plays a central role in nonsense-mediated mRNA decay (NMD), NMD only taking place in mRNAs bound to the CBC complex, but not on eIF4E-bound mRNAs. The CBC complex enhances NMD in mRNAs containing at least one exon-junction complex (EJC) via its interaction with UPF1, promoting the interaction between UPF1 and UPF2. The CBC complex is also involved in 'failsafe' NMD, which is independent of the EJC complex, while it does not participate in Staufen-mediated mRNA decay (SMD). During cell proliferation, the CBC complex is also involved in microRNAs (miRNAs) biogenesis via its interaction with SRRT/ARS2, thereby being required for miRNA-mediated RNA interference. The CBC complex also acts as a negative regulator of PARN, thereby acting as an inhibitor of mRNA deadenylation. In the CBC complex, NCBP2/CBP20 recognizes and binds capped RNAs (m7GpppG-capped RNA) but requires NCBP1/CBP80 to stabilize the movement of its N-terminal loop and lock the CBC into a high affinity cap-binding state with the cap structure. The conventional cap-binding complex with NCBP2 binds both small nuclear RNA (snRNA) and messenger (mRNA) and is involved in their export from the nucleus. The sequence is that of Nuclear cap-binding protein subunit 2 (Ncbp2) from Mus musculus (Mouse).